The primary structure comprises 829 residues: Transmembrane protease serine 7 (829 aa).

Residues 1 to 62 (MDKEKSDPSC…RAPFWNVQNK (62 aa)) are Cytoplasmic-facing. The tract at residues 26 to 52 (SVPGKLPGRRPPRKPIGKPRPRKQPKK) is disordered. A compositionally biased stretch (basic residues) spans 32–52 (PGRRPPRKPIGKPRPRKQPKK). A helical; Signal-anchor for type II membrane protein transmembrane segment spans residues 63–83 (IILFTVFLFILAVTAWTLLWL). The Extracellular segment spans residues 84 to 829 (YISKTESKDA…WIHKYVPSLL (746 aa)). An SEA domain is found at 92-220 (DAFYFVGMFR…DSVVLNAGLR (129 aa)). Cystine bridges form between C233–C259, C285–C308, and C351–C382. 2 CUB domains span residues 233–346 (CSRY…FEVI) and 351–467 (CEST…YNIS). N-linked (GlcNAc...) asparagine glycans are attached at residues N401 and N465. LDL-receptor class A domains follow at residues 469–505 (PCPA…LFCV), 503–540 (FCVT…QNCT), and 544–581 (PCTS…EGCG). 9 cysteine pairs are disulfide-bonded: C470–C482, C477–C495, C489–C504, C511–C530, C524–C539, C545–C557, C552–C571, C565–C580, and C617–C633. The Peptidase S1 domain maps to 592 to 826 (IVGGSDSQEG…FVPWIHKYVP (235 aa)). Active-site charge relay system residues include H632 and D680. Cystine bridges form between C716–C782, C748–C761, and C772–C802. Catalysis depends on S776, which acts as the Charge relay system.

Belongs to the peptidase S1 family. Forms a heterodimer with SERPINA5. N-glycosylated. As to expression, expressed in brain, eye, testis, skin, epididymis and salivary gland with lower levels in heart, skeletal muscle, thymus, ovary, prostate and uterus.

The protein resides in the cell membrane. In terms of biological role, serine protease which preferentially hydrolyzes peptides with Arg at the P1 position. The sequence is that of Transmembrane protease serine 7 (Tmprss7) from Mus musculus (Mouse).